The chain runs to 152 residues: UPF0178 protein YPTS_2857 (152 aa).

The protein belongs to the UPF0178 family.

This is UPF0178 protein YPTS_2857 from Yersinia pseudotuberculosis serotype IB (strain PB1/+).